We begin with the raw amino-acid sequence, 253 residues long: Ribonuclease 3 (253 aa).

The region spanning 29-157 is the RNase III domain; the sequence is VDELQKTIGH…MLGAVFLDAG (129 aa). Position 70 (Glu-70) interacts with Mg(2+). Asp-74 is a catalytic residue. Asp-143 and Glu-146 together coordinate Mg(2+). The active site involves Glu-146. The DRBM domain occupies 184 to 253; sequence DYKSQLQELT…AARAVATLDK (70 aa).

It belongs to the ribonuclease III family. As to quaternary structure, homodimer. It depends on Mg(2+) as a cofactor.

Its subcellular location is the cytoplasm. It catalyses the reaction Endonucleolytic cleavage to 5'-phosphomonoester.. Digests double-stranded RNA. Involved in the processing of primary rRNA transcript to yield the immediate precursors to the large and small rRNAs (23S and 16S). Processes some mRNAs, and tRNAs when they are encoded in the rRNA operon. Processes pre-crRNA and tracrRNA of type II CRISPR loci if present in the organism. In Nitratidesulfovibrio vulgaris (strain ATCC 29579 / DSM 644 / CCUG 34227 / NCIMB 8303 / VKM B-1760 / Hildenborough) (Desulfovibrio vulgaris), this protein is Ribonuclease 3.